Reading from the N-terminus, the 63-residue chain is Small ribosomal subunit protein eS30 (63 aa).

The disordered stretch occupies residues 1-33; sequence MGKVHGSLARAGKVKSQTPKVEKQEKPKKPQGR.

This sequence belongs to the eukaryotic ribosomal protein eS30 family. In terms of assembly, component of the small ribosomal subunit. Mature ribosomes consist of a small (40S) and a large (60S) subunit. The 40S subunit contains about 32 different proteins and 1 molecule of RNA (18S). The 60S subunit contains 45 different proteins and 3 molecules of RNA (25S, 5.8S and 5S).

The protein resides in the cytoplasm. Its function is as follows. Component of the ribosome, a large ribonucleoprotein complex responsible for the synthesis of proteins in the cell. The small ribosomal subunit (SSU) binds messenger RNAs (mRNAs) and translates the encoded message by selecting cognate aminoacyl-transfer RNA (tRNA) molecules. The large subunit (LSU) contains the ribosomal catalytic site termed the peptidyl transferase center (PTC), which catalyzes the formation of peptide bonds, thereby polymerizing the amino acids delivered by tRNAs into a polypeptide chain. The nascent polypeptides leave the ribosome through a tunnel in the LSU and interact with protein factors that function in enzymatic processing, targeting, and the membrane insertion of nascent chains at the exit of the ribosomal tunnel. The polypeptide is Small ribosomal subunit protein eS30 (RPS30) (Candida albicans (strain SC5314 / ATCC MYA-2876) (Yeast)).